A 190-amino-acid polypeptide reads, in one-letter code: Pyridoxal 5'-phosphate synthase subunit PdxT (190 aa).

46–48 (GES) is a binding site for L-glutamine. Catalysis depends on Cys-78, which acts as the Nucleophile. Residues Arg-105 and 134 to 135 (IR) contribute to the L-glutamine site. Residues His-170 and Glu-172 each act as charge relay system in the active site.

This sequence belongs to the glutaminase PdxT/SNO family. In the presence of PdxS, forms a dodecamer of heterodimers. Only shows activity in the heterodimer.

The enzyme catalyses aldehydo-D-ribose 5-phosphate + D-glyceraldehyde 3-phosphate + L-glutamine = pyridoxal 5'-phosphate + L-glutamate + phosphate + 3 H2O + H(+). It catalyses the reaction L-glutamine + H2O = L-glutamate + NH4(+). It participates in cofactor biosynthesis; pyridoxal 5'-phosphate biosynthesis. In terms of biological role, catalyzes the hydrolysis of glutamine to glutamate and ammonia as part of the biosynthesis of pyridoxal 5'-phosphate. The resulting ammonia molecule is channeled to the active site of PdxS. In Clostridium beijerinckii (strain ATCC 51743 / NCIMB 8052) (Clostridium acetobutylicum), this protein is Pyridoxal 5'-phosphate synthase subunit PdxT.